Reading from the N-terminus, the 432-residue chain is Heme-based aerotactic transducer HemAT (432 aa).

The 237-residue stretch at 184-420 folds into the Methyl-accepting transducer domain; that stretch reads YNQTRDEQEE…EVSRAVSHVA (237 aa).

This sequence belongs to the methyl-accepting chemotaxis (MCP) protein family. Homotetramer.

Heme-containing signal transducer responsible for aerotaxis, the migratory response toward or away from oxygen. The protein is Heme-based aerotactic transducer HemAT (hemAT) of Bacillus subtilis (strain 168).